The following is a 387-amino-acid chain: MSDDEREEKELDLTSPEVVTKYKSAAEIVNKALQLVLSECKPKAKIVDLCEKGDAFIKEQTGNMYKNVKKKIERGVAFPTCISVNNTVCHFSPLASDETVVEEGDILKIDMGCHIDGFIAVVGHTHVLHEGPVTGRAADVIAATNTAAEVALRLVRPGKKNSDVTEAIQKVAAAYDCKIVEGVLSHQMKQFVIDGNKVVLSVSNPDTRVDEAEFEENEVYSIDIVTSTGDGKPKLLDEKQTTIYKRAVDKSYNLKMKASRFIFSEISQKFPIMPFTARDLEEKRARLGLVECVNHELLQPYPVLHEKPGDLVAHIKFTVLLMPNGSDRVTSHALQELQPTKTTENEPEIKAWLALPTKTKKKGGGKKKKGKKGDKVEEASQAEPMEG.

2 necessary for nucleolar localization regions span residues methionine 1–leucine 49 and leucine 297–glycine 387. Residues valine 47 to alanine 55 are RNA-binding. The segment at leucine 337–glycine 387 is disordered. Positions proline 356–glycine 373 are interaction with RNA. The span at lysine 358 to lysine 372 shows a compositional bias: basic residues. The Nuclear localization signal signature appears at lysine 360–lysine 369.

This sequence belongs to the peptidase M24 family. As to quaternary structure, component of a ribonucleoprotein complex. As to expression, expressed during tuberisation and in roots, nodes, internodes, petioles, leaves, stolons, tubers and sprouts.

The protein localises to the nucleus. Binds RNA. Associates with 28S, 18S and 5.8S mature rRNAs, several rRNA precursors and probably U3 small nucleolar RNA. May be involved in regulation of intermediate and late steps of rRNA processing. May be involved in ribosome assembly. Required for expression of cell cycle genes such as CYCD3-1, RNR2A and CDKB1-1. Promotes, in a dose- and auxin-dependent manner, organ growth by stimulating both cell proliferation and expansion, via the regulation of RBR1 levels. The chain is ERBB-3 BINDING PROTEIN 1 from Solanum tuberosum (Potato).